The following is a 634-amino-acid chain: Ankyrin repeat and SOCS box protein 2 (634 aa).

The UIM domain occupies 26-45; sequence SEEELVQMAIEQSLADKTRG. The tract at residues 35–81 is disordered; sequence IEQSLADKTRGPTPAETSVSSQTNHQPGHIHPWTRSSSPPESPPARA. The segment covering 49-60 has biased composition (polar residues); that stretch reads AETSVSSQTNHQ. ANK repeat units lie at residues 104–133, 137–167, 171–200, 204–233, 237–266, 270–299, 303–332, 336–365, 368–397, 410–439, 440–469, and 476–504; these read AAMD…NLAE, EGWL…TIDQ, QEET…EPDI, SRET…DANH, RGWT…KVEA, YSIT…DINT, DSAS…DANK, DGLL…RTRV, SGIS…DVNT, RRTS…DPNR, DVIS…NIDA, and TAFP…DGEP. Ser-371 bears the Phosphoserine mark. The SOCS box domain maps to 580–634; it reads EDWAVIKEKAEPPRPLAHLCRLRVRKAIGKYRIKLLDTLPLPGRLIRYLKYENTQ.

This sequence belongs to the ankyrin SOCS box (ASB) family. Component of a probable ECS E3 ubiquitin-protein ligase complex which contains CUL5, either RBX1 or RNF7/RBX2, Elongin BC complex (ELOB and ELOC) and ASB2. Interacts with SKP2. Through its interaction with SKP2, likely to bridge the formation of dimeric E3-ubiquitin-protein ligase complexes composed of an ECS complex and an SCF(SKP2) complex. Interacts with JAK2; the interaction targets JAK2 for Notch-mediated proteasomal degradation. Interacts with TCF3/E2A; the interaction is mediated by SKP2 and targets TCF3 for Notch-mediated proteasomal degradation. Interacts with DES. Monoubiquitinated.

The protein localises to the cytoplasm. Its subcellular location is the cytoskeleton. It localises to the stress fiber. The protein resides in the myofibril. It is found in the sarcomere. The protein localises to the z line. It participates in protein modification; protein ubiquitination. Functionally, substrate-recognition component of a SCF-like ECS (Elongin-Cullin-SOCS-box protein) E3 ubiquitin-protein ligase complex which mediates the ubiquitination and subsequent proteasomal degradation of target proteins. Mediates Notch-induced ubiquitination and degradation of substrates including E2A and JAK2. Required during embryonic heart development for complete heart looping. Required for cardiomyocyte differentiation. Involved in myogenic differentiation and targets filamin FLNB for proteasomal degradation but not filamin FLNA. Also targets DES for proteasomal degradation. Acts as a negative regulator of skeletal muscle mass. The sequence is that of Ankyrin repeat and SOCS box protein 2 from Rattus norvegicus (Rat).